The sequence spans 317 residues: Toluene-4-sulfonate monooxygenase system reductase subunit TsaB1 (317 aa).

Residues 2 to 108 (SADVPVTVAA…RATCSEMAPE (107 aa)) form the FAD-binding FR-type domain. 110-220 (RRVLLLAGGI…PGSVRMERFK (111 aa)) is an NAD(+) binding site. One can recognise a 2Fe-2S ferredoxin-type domain in the interval 230-317 (QPFELVLQRA…CGGGRLVLDI (88 aa)). 4 residues coordinate [2Fe-2S] cluster: C266, C271, C274, and C304.

In terms of assembly, monomer. Part of the p-toluenesulfonate methyl-monooxygenase complex TsaBM, comprising the reductase TsaB and the oxygenase TsaM. FMN is required as a cofactor.

Iron-sulfur flavoprotein carrying electrons from NADH to the oxygenase TsaM. Involved in the toluene-4-sulfonate degradation pathway. The chain is Toluene-4-sulfonate monooxygenase system reductase subunit TsaB1 (tsaB1) from Comamonas testosteroni (Pseudomonas testosteroni).